The chain runs to 178 residues: Large ribosomal subunit protein bL25 (178 aa).

Belongs to the bacterial ribosomal protein bL25 family. CTC subfamily. As to quaternary structure, part of the 50S ribosomal subunit; part of the 5S rRNA/L5/L18/L25 subcomplex. Contacts the 5S rRNA. Binds to the 5S rRNA independently of L5 and L18.

Its function is as follows. This is one of the proteins that binds to the 5S RNA in the ribosome where it forms part of the central protuberance. The sequence is that of Large ribosomal subunit protein bL25 from Helicobacter pylori (strain J99 / ATCC 700824) (Campylobacter pylori J99).